Reading from the N-terminus, the 232-residue chain is Ras-related protein RabP (232 aa).

15–22 lines the GTP pocket; sequence GNYGVGKS. The short motif at 35-40 is the Effector region element; the sequence is DNTTGF. GTP-binding positions include 58–62 and 118–121; these read DTSGQ and NKFD. S-geranylgeranyl cysteine attachment occurs at residues cysteine 229 and cysteine 230.

It belongs to the small GTPase superfamily. Rab family.

The protein localises to the cell membrane. In Dictyostelium discoideum (Social amoeba), this protein is Ras-related protein RabP (rabP).